The sequence spans 382 residues: MTEQRPLTIALVAGETSGDILGAGLIRALKERVPNARFVGVAGPRMQAEGCEAWYEMEELAVMGIVEVLGRLRRLLHIRADLTKRFGELKPDVFVGIDAPDFNIILEGNLKKQGIKTIHYVSPSVWAWRQKRVFKIGRATDLVLAFLPFEKAFYDKYNVPCRFIGHTMADAMPLDPDKNSARDVLGIPYDAHCLALLPGSRGAEVEMLSADFLKTAQLLRQTYPDLEIVVPLVNAKRREQFERIKAAVAPDLSVHLLDGMGREAMVASDAALLASGTAALECMLAKCPMVVGYRMKPFTFWLAKRLVKTDYVSLPNLLAGRELVKELLQEECEPQKLAAALLPLLANGKTSHAMHDTFRELHQQIRCNADEQAAQAVLELAQ.

Belongs to the LpxB family.

It catalyses the reaction 2-N,3-O-bis[(3R)-3-hydroxytetradecanoyl]-alpha-D-glucosaminyl 1-phosphate + UDP-2-N,3-O-bis[(3R)-3-hydroxytetradecanoyl]-alpha-D-glucosamine = lipid A disaccharide (E. coli) + UDP + H(+). The enzyme catalyses a lipid X + a UDP-2-N,3-O-bis[(3R)-3-hydroxyacyl]-alpha-D-glucosamine = a lipid A disaccharide + UDP + H(+). The protein operates within glycolipid biosynthesis; lipid IV(A) biosynthesis; lipid IV(A) from (3R)-3-hydroxytetradecanoyl-[acyl-carrier-protein] and UDP-N-acetyl-alpha-D-glucosamine: step 5/6. In terms of biological role, condensation of UDP-2,3-diacylglucosamine and 2,3-diacylglucosamine-1-phosphate to form lipid A disaccharide, a precursor of lipid A, a phosphorylated glycolipid that anchors the lipopolysaccharide to the outer membrane of the cell. The sequence is that of Lipid-A-disaccharide synthase from Escherichia coli O157:H7.